The sequence spans 344 residues: MTSAAITPPTTVDRPMTDPFGRTIDYLRVSITDRCDFRCVYCMAEDMTFLPRADLLTLEELDRLCSAFIAKGVRKLRLTGGEPLVRRNMMSLVRSLSRHLKTGALDELTLTTNGSQLARFAAELADCGVRRVNVSLDTLDPDEFRRITRWGDLDRVLAGINAARAAGLAVKINSVVLKGSNEDEIPSLMRWAHGLGMGLTLIEVMPLGEIGEGRIDQYVPLSLIRARLSANYTLTDLPDSTGGPARYVRVEETGGRLGFITPLTHNFCESCNRVRITCTGTIHTCLGHEDASDLRRPLRASADDALLSAAIDQAIGSKPKGHDFIIDRRHNRPSVSRHMSVTGG.

A Radical SAM core domain is found at Pro19–Asp239. GTP is bound at residue Arg28. [4Fe-4S] cluster-binding residues include Cys35 and Cys39. Residue Tyr41 participates in S-adenosyl-L-methionine binding. Residue Cys42 coordinates [4Fe-4S] cluster. Position 77 (Arg77) interacts with GTP. S-adenosyl-L-methionine is bound at residue Gly81. Thr111 contacts GTP. Residue Ser135 coordinates S-adenosyl-L-methionine. Residue Lys171 participates in GTP binding. Met205 serves as a coordination point for S-adenosyl-L-methionine. [4Fe-4S] cluster contacts are provided by Cys268 and Cys271. Arg273–Arg275 serves as a coordination point for GTP. Residue Cys285 participates in [4Fe-4S] cluster binding.

The protein belongs to the radical SAM superfamily. MoaA family. Monomer and homodimer. [4Fe-4S] cluster serves as cofactor.

The enzyme catalyses GTP + AH2 + S-adenosyl-L-methionine = (8S)-3',8-cyclo-7,8-dihydroguanosine 5'-triphosphate + 5'-deoxyadenosine + L-methionine + A + H(+). It participates in cofactor biosynthesis; molybdopterin biosynthesis. Functionally, catalyzes the cyclization of GTP to (8S)-3',8-cyclo-7,8-dihydroguanosine 5'-triphosphate. This Rhodopseudomonas palustris (strain TIE-1) protein is GTP 3',8-cyclase.